A 454-amino-acid polypeptide reads, in one-letter code: GTPase Der (454 aa).

EngA-type G domains are found at residues 4–168 (PQVA…PEKD) and 178–352 (MKIA…KQAQ). GTP contacts are provided by residues 10–17 (GRPNVGKS), 57–61 (DTGGM), 120–123 (NKAD), 184–191 (GRRNVGKS), 231–235 (DTPGL), and 296–299 (NKWD). The KH-like domain maps to 353-437 (SRVSTGELNR…PIKLYMQQRS (85 aa)).

This sequence belongs to the TRAFAC class TrmE-Era-EngA-EngB-Septin-like GTPase superfamily. EngA (Der) GTPase family. In terms of assembly, associates with the 50S ribosomal subunit.

Its function is as follows. GTPase that plays an essential role in the late steps of ribosome biogenesis. This is GTPase Der from Rhodopirellula baltica (strain DSM 10527 / NCIMB 13988 / SH1).